The following is a 101-amino-acid chain: Protein RADIALIS-like 2 (101 aa).

One can recognise an SANT domain in the interval 9 to 64 (YGSGSWTVKQNKAFERALAVYDQDTPDRWHNVARAVGGKTPEEAKRQYDLLVRDIE). The segment at 69–101 (GHVPFPDYKTTTGNSNRGRLRDEEKRMRSMKLQ) is disordered.

As to expression, expressed in the funiculus of ovules and in embryos. In young ovules, expression is observed in the adaxial side of the funiculus (the stalk connecting the embryo sac to the placenta). Also expressed in heart-stage embryos, in the cortex and endodermis of the hypocotyl region but not in the cotyledons, shoot and root apical meristems, provasculature or epidermis. Not detected in young seedlings, mature roots or in young floral primordia.

The protein localises to the nucleus. Its function is as follows. Probable transcription factor. Required for female gametophyte development. In Arabidopsis thaliana (Mouse-ear cress), this protein is Protein RADIALIS-like 2 (RL2).